A 248-amino-acid polypeptide reads, in one-letter code: 3-deoxy-manno-octulosonate cytidylyltransferase (248 aa).

This sequence belongs to the KdsB family.

It localises to the cytoplasm. It carries out the reaction 3-deoxy-alpha-D-manno-oct-2-ulosonate + CTP = CMP-3-deoxy-beta-D-manno-octulosonate + diphosphate. It functions in the pathway nucleotide-sugar biosynthesis; CMP-3-deoxy-D-manno-octulosonate biosynthesis; CMP-3-deoxy-D-manno-octulosonate from 3-deoxy-D-manno-octulosonate and CTP: step 1/1. The protein operates within bacterial outer membrane biogenesis; lipopolysaccharide biosynthesis. Functionally, activates KDO (a required 8-carbon sugar) for incorporation into bacterial lipopolysaccharide in Gram-negative bacteria. The chain is 3-deoxy-manno-octulosonate cytidylyltransferase from Christiangramia forsetii (strain DSM 17595 / CGMCC 1.15422 / KT0803) (Gramella forsetii).